A 346-amino-acid chain; its full sequence is Ribonucleoside-diphosphate reductase subunit beta (346 aa).

E89, E120, and H123 together coordinate Fe cation. Residue Y129 is part of the active site. 3 residues coordinate Fe cation: E193, E227, and H230.

This sequence belongs to the ribonucleoside diphosphate reductase small chain family. Tetramer of two alpha and two beta subunits. Fe cation serves as cofactor.

It carries out the reaction a 2'-deoxyribonucleoside 5'-diphosphate + [thioredoxin]-disulfide + H2O = a ribonucleoside 5'-diphosphate + [thioredoxin]-dithiol. In terms of biological role, provides the precursors necessary for DNA synthesis. Catalyzes the biosynthesis of deoxyribonucleotides from the corresponding ribonucleotides. The chain is Ribonucleoside-diphosphate reductase subunit beta (nrdB) from Chlamydia pneumoniae (Chlamydophila pneumoniae).